Here is a 248-residue protein sequence, read N- to C-terminus: MLIIPAIDLKDGQCVRLKQGIMEDATVFSETPETVALHWLDNGARQLHLVDLNGAFAGKPKNGEAIRAIVEAIDGRIPIQLGGGIRDLETVEYYLDNGISYVIIGTAAVKIPGFLHDACYAFPGQIMVGLDAKGGKVAVDGWSKVTGHDVIDLAKKFQDYGVEAIIHTDIGRDGMLNGLNIEATVELAQALTIPVIASGGVTNLDDIRKLCQVQSEGITGVITGRAIYQGSLDFKEAQALADQLDSAK.

D8 acts as the Proton acceptor in catalysis. D131 serves as the catalytic Proton donor.

Belongs to the HisA/HisF family.

Its subcellular location is the cytoplasm. The catalysed reaction is 1-(5-phospho-beta-D-ribosyl)-5-[(5-phospho-beta-D-ribosylamino)methylideneamino]imidazole-4-carboxamide = 5-[(5-phospho-1-deoxy-D-ribulos-1-ylimino)methylamino]-1-(5-phospho-beta-D-ribosyl)imidazole-4-carboxamide. It functions in the pathway amino-acid biosynthesis; L-histidine biosynthesis; L-histidine from 5-phospho-alpha-D-ribose 1-diphosphate: step 4/9. The sequence is that of 1-(5-phosphoribosyl)-5-[(5-phosphoribosylamino)methylideneamino] imidazole-4-carboxamide isomerase from Nitrosomonas eutropha (strain DSM 101675 / C91 / Nm57).